The following is a 290-amino-acid chain: NAD kinase (290 aa).

Catalysis depends on Asp-72, which acts as the Proton acceptor. NAD(+)-binding positions include 72-73, 146-147, Arg-174, Asp-176, and 187-192; these read DG, NE, and TAYALS.

It belongs to the NAD kinase family. Requires a divalent metal cation as cofactor.

The protein resides in the cytoplasm. The catalysed reaction is NAD(+) + ATP = ADP + NADP(+) + H(+). Functionally, involved in the regulation of the intracellular balance of NAD and NADP, and is a key enzyme in the biosynthesis of NADP. Catalyzes specifically the phosphorylation on 2'-hydroxyl of the adenosine moiety of NAD to yield NADP. In Methylococcus capsulatus (strain ATCC 33009 / NCIMB 11132 / Bath), this protein is NAD kinase.